A 157-amino-acid polypeptide reads, in one-letter code: Small ribosomal subunit protein uS7 (157 aa).

The protein belongs to the universal ribosomal protein uS7 family. Part of the 30S ribosomal subunit. Contacts proteins S9 and S11.

In terms of biological role, one of the primary rRNA binding proteins, it binds directly to 16S rRNA where it nucleates assembly of the head domain of the 30S subunit. Is located at the subunit interface close to the decoding center, probably blocks exit of the E-site tRNA. This is Small ribosomal subunit protein uS7 from Chlamydia felis (strain Fe/C-56) (Chlamydophila felis).